Here is a 516-residue protein sequence, read N- to C-terminus: MLKLAPTPSDDPVLRLTGITKTFPGVKALNAVSLELYPGEVTALIGENGAGKSTIVKVLTGIYRADGGEITVDGEPVNFTSAEDATAAGITAIHQETVLFDELSVAENIFIGHAPRGRFGLIDTSTMIARAQEILDRIDAPLRATTPLKDLGIANKHLVAIARALSVDARVVIMDEPTAALSQKEIEELYELVDRLKAEGRAILFISHKFDEVFRIADRYAVFRDGEHVGAGLMADVNEGDLVQLMVGRAVDQIFPERDHAKGAEVLRVEGYAHPTEFDDISLTLHAGEILGFYGLVGAGRSELMQAIFGITKPSAGTIQIAGEARTIGSPAQAIENGIVYVPEDRGQQGAVLGLPIFQNVTLPSLSQTSRGGFLKLAAEFALARDYTERLELRAAALDQDVGNLSGGNQQKVVIAKWLATKPRVIILDEPTKGIDIGSKAAVHAFMAELAAEGLAVIMVSSEIPEILGMSDRVIVMREGLIAAELDRADLSPEVLVRHAAGIGPKVHENEMEERP.

2 consecutive ABC transporter domains span residues 14-250 and 261-504; these read LRLT…VGRA and AKGA…AGIG. 46–53 provides a ligand contact to ATP; the sequence is GENGAGKS.

This sequence belongs to the ABC transporter superfamily. Ribose importer (TC 3.A.1.2.1) family. The complex is composed of an ATP-binding protein (RbsA), two transmembrane proteins (RbsC) and a solute-binding protein (RbsB).

Its subcellular location is the cell inner membrane. It carries out the reaction D-ribose(out) + ATP + H2O = D-ribose(in) + ADP + phosphate + H(+). Part of the ABC transporter complex RbsABC involved in ribose import. Responsible for energy coupling to the transport system. The protein is Ribose import ATP-binding protein RbsA of Jannaschia sp. (strain CCS1).